The chain runs to 331 residues: MKQTVYTASPESQQIHVWSLNHEGTLTLVQVVDVPGQVQPMVVSPDKRYLYVGVRPEFRVLAYRIAPDDGALTFAAESALPGSPTHISTDHHGRFVFVGSYNAGNVSVTRLQDGLPVELVDVVERLDGCHSANITPDNRTLWVPALKQDRICLFTLSDDGHLVAQEPAEVNTVEGAGPRHMVFHPNRQYAYCVNELNSSVDVWQLKNPHGEIECVQTLDMMPADFSDTRWAADIHITPDGRHLYACDRTASLITVFSVSEDGSVLSVEGFQPTEAQPRGFNIDNSGKYLIAAGQKSHHIAVYEITGTQGLLTEKGRYAVGQGPMWVVVNAY.

Belongs to the cycloisomerase 2 family.

It carries out the reaction 6-phospho-D-glucono-1,5-lactone + H2O = 6-phospho-D-gluconate + H(+). Its pathway is carbohydrate degradation; pentose phosphate pathway; D-ribulose 5-phosphate from D-glucose 6-phosphate (oxidative stage): step 2/3. In terms of biological role, catalyzes the hydrolysis of 6-phosphogluconolactone to 6-phosphogluconate. This is 6-phosphogluconolactonase from Salmonella paratyphi B (strain ATCC BAA-1250 / SPB7).